The chain runs to 426 residues: Serine--tRNA ligase (426 aa).

233-235 (TAE) lines the L-serine pocket. 264-266 (RSE) contributes to the ATP binding site. An L-serine-binding site is contributed by Glu-287. ATP is bound at residue 351–354 (EISS). Residue Ser-387 participates in L-serine binding.

Belongs to the class-II aminoacyl-tRNA synthetase family. Type-1 seryl-tRNA synthetase subfamily. Homodimer. The tRNA molecule binds across the dimer.

It localises to the cytoplasm. The catalysed reaction is tRNA(Ser) + L-serine + ATP = L-seryl-tRNA(Ser) + AMP + diphosphate + H(+). It catalyses the reaction tRNA(Sec) + L-serine + ATP = L-seryl-tRNA(Sec) + AMP + diphosphate + H(+). The protein operates within aminoacyl-tRNA biosynthesis; selenocysteinyl-tRNA(Sec) biosynthesis; L-seryl-tRNA(Sec) from L-serine and tRNA(Sec): step 1/1. Catalyzes the attachment of serine to tRNA(Ser). Is also able to aminoacylate tRNA(Sec) with serine, to form the misacylated tRNA L-seryl-tRNA(Sec), which will be further converted into selenocysteinyl-tRNA(Sec). The protein is Serine--tRNA ligase of Pseudomonas savastanoi pv. phaseolicola (strain 1448A / Race 6) (Pseudomonas syringae pv. phaseolicola (strain 1448A / Race 6)).